Consider the following 316-residue polypeptide: 4-hydroxyphenylacetate decarboxylase activating enzyme (316 aa).

One can recognise a Radical SAM core domain in the interval 20–307 (HDGPGCRTTV…QDIFLDNGIA (288 aa)). Positions 34, 38, 41, 60, 66, 69, and 105 each coordinate [4Fe-4S] cluster. 40-42 (WCA) serves as a coordination point for S-adenosyl-L-methionine. Positions 84–115 (NKPVIDWNICKDCESFECVNSCYYNAFKLCAK) constitute a 4Fe-4S ferredoxin-type domain. S-adenosyl-L-methionine is bound by residues glycine 144, 193–195 (DIK), and histidine 267.

Belongs to the organic radical-activating enzymes family. As to quaternary structure, monomer. It depends on [4Fe-4S] cluster as a cofactor.

It carries out the reaction glycyl-[protein] + reduced [flavodoxin] + S-adenosyl-L-methionine = glycin-2-yl radical-[protein] + semiquinone [flavodoxin] + 5'-deoxyadenosine + L-methionine + H(+). Functionally, catalyzes activation of 4-hydroxyphenylacetate decarboxylase under anaerobic conditions by generation of an organic free radical on a glycine residue, via a homolytic cleavage of S-adenosyl-L-methionine (SAM). The chain is 4-hydroxyphenylacetate decarboxylase activating enzyme from Clostridioides difficile (Peptoclostridium difficile).